The following is a 196-amino-acid chain: HTH-type transcriptional regulator EcpR (196 aa).

Residues 138–196 (KDIKKDKITDREMEIIRMTAQGMQPKSIARIENCSVKTVYTHRRNAEAKLYSKIYKLVQ) enclose the HTH luxR-type domain. A DNA-binding region (H-T-H motif) is located at residues 162-181 (PKSIARIENCSVKTVYTHRR).

Belongs to the EcpR/MatA family.

It localises to the cytoplasm. In terms of biological role, part of the ecpRABCDE operon, which encodes the E.coli common pilus (ECP). ECP is found in both commensal and pathogenic strains and plays a dual role in early-stage biofilm development and host cell recognition. Positively regulates the expression of the ecp operon. The protein is HTH-type transcriptional regulator EcpR (ecpR) of Escherichia coli O139:H28 (strain E24377A / ETEC).